We begin with the raw amino-acid sequence, 752 residues long: Myotubularin-related protein 10 (752 aa).

The region spanning F206 to F636 is the Myotubularin phosphatase domain. A coiled-coil region spans residues T652–T683.

This sequence belongs to the protein-tyrosine phosphatase family. Non-receptor class myotubularin subfamily.

The chain is Myotubularin-related protein 10 (mtmr10) from Danio rerio (Zebrafish).